A 314-amino-acid polypeptide reads, in one-letter code: Acetyl-coenzyme A carboxylase carboxyl transferase subunit alpha (314 aa).

A CoA carboxyltransferase C-terminal domain is found at 32–289 (EIDMLEASLE…KSAFVEQLDS (258 aa)).

It belongs to the AccA family. In terms of assembly, acetyl-CoA carboxylase is a heterohexamer composed of biotin carboxyl carrier protein (AccB), biotin carboxylase (AccC) and two subunits each of ACCase subunit alpha (AccA) and ACCase subunit beta (AccD).

It is found in the cytoplasm. It carries out the reaction N(6)-carboxybiotinyl-L-lysyl-[protein] + acetyl-CoA = N(6)-biotinyl-L-lysyl-[protein] + malonyl-CoA. It functions in the pathway lipid metabolism; malonyl-CoA biosynthesis; malonyl-CoA from acetyl-CoA: step 1/1. In terms of biological role, component of the acetyl coenzyme A carboxylase (ACC) complex. First, biotin carboxylase catalyzes the carboxylation of biotin on its carrier protein (BCCP) and then the CO(2) group is transferred by the carboxyltransferase to acetyl-CoA to form malonyl-CoA. This is Acetyl-coenzyme A carboxylase carboxyl transferase subunit alpha from Staphylococcus aureus (strain bovine RF122 / ET3-1).